The sequence spans 188 residues: Large ribosomal subunit protein uL5 (188 aa).

It belongs to the universal ribosomal protein uL5 family. As to quaternary structure, part of the 50S ribosomal subunit; contacts the 5S rRNA and probably tRNA. Forms a bridge to the 30S subunit in the 70S ribosome.

Its function is as follows. This is one of the proteins that bind and probably mediate the attachment of the 5S RNA into the large ribosomal subunit, where it forms part of the central protuberance. In the 70S ribosome it contacts protein S13 of the 30S subunit (bridge B1b), connecting the 2 subunits; this bridge is implicated in subunit movement. May contact the P site tRNA; the 5S rRNA and some of its associated proteins might help stabilize positioning of ribosome-bound tRNAs. This chain is Large ribosomal subunit protein uL5, found in Pyrococcus abyssi (strain GE5 / Orsay).